The sequence spans 549 residues: Membrane protein insertase YidC (549 aa).

Residues 6-26 (NLLLIGLLLVSFMLWQSWMVD) form a helical membrane-spanning segment. A disordered region spans residues 35–55 (ATAESSVPASSGGDVPNQNDA). The next 4 membrane-spanning stretches (helical) occupy residues 349–369 (QFLHGLVGNWGVAIILITMIV), 424–444 (LGGCFPLLIQMPIFIALYWTL), 462–482 (LSVKDPYYVLPLLMGATMWYI), and 503–523 (PIVFTFMFLWFPSGLTLYWVV).

Belongs to the OXA1/ALB3/YidC family. Type 1 subfamily. As to quaternary structure, interacts with the Sec translocase complex via SecD. Specifically interacts with transmembrane segments of nascent integral membrane proteins during membrane integration.

The protein resides in the cell inner membrane. Its function is as follows. Required for the insertion and/or proper folding and/or complex formation of integral membrane proteins into the membrane. Involved in integration of membrane proteins that insert both dependently and independently of the Sec translocase complex, as well as at least some lipoproteins. Aids folding of multispanning membrane proteins. The protein is Membrane protein insertase YidC of Tolumonas auensis (strain DSM 9187 / NBRC 110442 / TA 4).